The chain runs to 463 residues: Elongation factor 1-alpha (463 aa).

In terms of domain architecture, tr-type G spans 5 to 242 (KTHINIVVIG…DAILPPARPT (238 aa)). The interval 14–21 (GHVDSGKS) is G1. GTP is bound at residue 14–21 (GHVDSGKS). The tract at residues 70–74 (GITID) is G2. Residues 91-94 (DAPG) form a G3 region. Residues 91 to 95 (DAPGH) and 153 to 156 (NKMD) each bind GTP. Residues 153-156 (NKMD) form a G4 region. The segment at 194–196 (SGW) is G5. 5-glutamyl glycerylphosphorylethanolamine occurs at positions 301 and 374.

This sequence belongs to the TRAFAC class translation factor GTPase superfamily. Classic translation factor GTPase family. EF-Tu/EF-1A subfamily.

It is found in the cytoplasm. Functionally, this protein promotes the GTP-dependent binding of aminoacyl-tRNA to the A-site of ribosomes during protein biosynthesis. The chain is Elongation factor 1-alpha from Bombyx mori (Silk moth).